Reading from the N-terminus, the 821-residue chain is Lon protease (821 aa).

A Lon N-terminal domain is found at 18-216; it reads LPLMSLREVV…KVYELLQGEI (199 aa). 368–375 is a binding site for ATP; the sequence is GPPGVGKT. A Lon proteolytic domain is found at 606-787; that stretch reads TSQVGVCTGL…DEVLPQALMA (182 aa). Catalysis depends on residues S693 and K736.

The protein belongs to the peptidase S16 family. In terms of assembly, homohexamer. Organized in a ring with a central cavity.

The protein localises to the cytoplasm. It catalyses the reaction Hydrolysis of proteins in presence of ATP.. In terms of biological role, ATP-dependent serine protease that mediates the selective degradation of mutant and abnormal proteins as well as certain short-lived regulatory proteins. Required for cellular homeostasis and for survival from DNA damage and developmental changes induced by stress. Degrades polypeptides processively to yield small peptide fragments that are 5 to 10 amino acids long. Binds to DNA in a double-stranded, site-specific manner. The sequence is that of Lon protease from Nitratidesulfovibrio vulgaris (strain ATCC 29579 / DSM 644 / CCUG 34227 / NCIMB 8303 / VKM B-1760 / Hildenborough) (Desulfovibrio vulgaris).